Consider the following 274-residue polypeptide: Ribosomal RNA small subunit methyltransferase A (274 aa).

S-adenosyl-L-methionine is bound by residues Asn-27, Leu-29, Gly-54, Glu-75, Asp-100, and Asn-121.

It belongs to the class I-like SAM-binding methyltransferase superfamily. rRNA adenine N(6)-methyltransferase family. RsmA subfamily.

Its subcellular location is the cytoplasm. The enzyme catalyses adenosine(1518)/adenosine(1519) in 16S rRNA + 4 S-adenosyl-L-methionine = N(6)-dimethyladenosine(1518)/N(6)-dimethyladenosine(1519) in 16S rRNA + 4 S-adenosyl-L-homocysteine + 4 H(+). Specifically dimethylates two adjacent adenosines (A1518 and A1519) in the loop of a conserved hairpin near the 3'-end of 16S rRNA in the 30S particle. May play a critical role in biogenesis of 30S subunits. The polypeptide is Ribosomal RNA small subunit methyltransferase A (Acinetobacter baylyi (strain ATCC 33305 / BD413 / ADP1)).